The sequence spans 122 residues: Small ribosomal subunit protein uS13 (122 aa).

The disordered stretch occupies residues Arg94–Lys122.

The protein belongs to the universal ribosomal protein uS13 family. Part of the 30S ribosomal subunit. Forms a loose heterodimer with protein S19. Forms two bridges to the 50S subunit in the 70S ribosome.

Functionally, located at the top of the head of the 30S subunit, it contacts several helices of the 16S rRNA. In the 70S ribosome it contacts the 23S rRNA (bridge B1a) and protein L5 of the 50S subunit (bridge B1b), connecting the 2 subunits; these bridges are implicated in subunit movement. Contacts the tRNAs in the A and P-sites. The chain is Small ribosomal subunit protein uS13 from Rubrobacter xylanophilus (strain DSM 9941 / JCM 11954 / NBRC 16129 / PRD-1).